We begin with the raw amino-acid sequence, 290 residues long: Protease HtpX (290 aa).

2 helical membrane-spanning segments follow: residues 6–26 (LFLVTNLAVMLVLGVVLNILF) and 36–56 (ISGLLMFCAVFGFGGSFISLL). Histidine 143 contributes to the Zn(2+) binding site. The active site involves glutamate 144. Histidine 147 lines the Zn(2+) pocket. The next 2 helical transmembrane spans lie at 158–178 (LIQGVVNTFVMFFARIVAGVI) and 200–220 (ITVFVLEMAFGVLASMIVMWF). Glutamate 225 is a Zn(2+) binding site.

This sequence belongs to the peptidase M48B family. The cofactor is Zn(2+).

The protein resides in the cell inner membrane. This Aeromonas salmonicida (strain A449) protein is Protease HtpX.